A 261-amino-acid polypeptide reads, in one-letter code: Triosephosphate isomerase (261 aa).

10–12 (NWK) serves as a coordination point for substrate. His100 functions as the Electrophile in the catalytic mechanism. The Proton acceptor role is filled by Glu172. Residues Gly178, Ser218, and 239–240 (GG) contribute to the substrate site.

This sequence belongs to the triosephosphate isomerase family. As to quaternary structure, homodimer.

It is found in the cytoplasm. The catalysed reaction is D-glyceraldehyde 3-phosphate = dihydroxyacetone phosphate. It functions in the pathway carbohydrate biosynthesis; gluconeogenesis. The protein operates within carbohydrate degradation; glycolysis; D-glyceraldehyde 3-phosphate from glycerone phosphate: step 1/1. In terms of biological role, involved in the gluconeogenesis. Catalyzes stereospecifically the conversion of dihydroxyacetone phosphate (DHAP) to D-glyceraldehyde-3-phosphate (G3P). The protein is Triosephosphate isomerase of Rhodococcus jostii (strain RHA1).